The chain runs to 729 residues: Cullin-6 (729 aa).

A Cullin neddylation domain is found at Asp-659–Asn-720. A Glycyl lysine isopeptide (Lys-Gly) (interchain with G-Cter in NEDD8) cross-link involves residue Lys-673.

It belongs to the cullin family. As to quaternary structure, probably interacts with skr-3. Post-translationally, neddylated; which enhances the ubiquitination activity of SCF-like complex.

Probable core component of cullin-based SCF-like E3 ubiquitin-protein ligase complexes which mediate the ubiquitination and subsequent proteasomal degradation of target proteins. This Caenorhabditis elegans protein is Cullin-6 (cul-6).